Here is a 303-residue protein sequence, read N- to C-terminus: NmrA-like family domain-containing oxidoreductase FVEG_08287 (303 aa).

NADP(+) contacts are provided by residues leucine 8–leucine 13, leucine 8–glycine 14, leucine 36–serine 39, arginine 37, glutamine 56–glycine 57, isoleucine 77–arginine 79, and phenylalanine 159–phenylalanine 162.

The protein belongs to the NmrA-type oxidoreductase family.

NmrA-like family domain-containing oxidoreductase; part of the Fusarium detoxification of benzoxazolinone cluster 1 (FDB1) involved in the degradation of benzoxazolinones produced by the host plant. Maize, wheat, and rye produce the 2 benzoxazinone phytoanticipins 2,4-dihy-droxy-7-methoxy-1,4-benzoxazin-3-one (DIMBOA) and 2,4-dihydroxy-1,4-benzoxazin-3-one (DIBOA) that, due to their inherent instability once released, spontaneously degrade to the more stable corresponding benzoxazolinones, 6-methoxy-2-benzoxazolinone (MBOA) and 2-benzoxazolinone (BOA), respectively. The first step in the detoxification of benzoxazolinones involves the hydrolysis of the cyclic ester bond of benzoxazolinones by the FDB1 cluster gamma-lactamase MBL1 to aminophenols. MBL1 is able to convert BOA into 2-aminophenol (2-AP), as well as MBOA into 5-methoxy-2-aminophenol (2-AMP). The FDB2 cluster N-malonyltransferase FDB2/NAT1 then metabolizes aminophenols via N-malonylation to non-toxic malonamic acids. FDB2/NAT1 converts 2-AP into N-(2-hydroxyphenyl) malonamic acid (HPMA) and 2-AMP into N-(2-hydroxy-4-methoxyphenyl) malonamic acid (HMPMA). The duplicated dienlactone hydrolases DLH1 and DLH2 may provide redundant function for hydrolyzing the lactone moiety in the BOA molecule. The roles of the amidases an other enzymes encoded by the 2 FDB clusters have not been identified so far. The sequence is that of NmrA-like family domain-containing oxidoreductase FVEG_08287 from Gibberella moniliformis (strain M3125 / FGSC 7600) (Maize ear and stalk rot fungus).